Reading from the N-terminus, the 101-residue chain is Integration host factor subunit beta (101 aa).

Belongs to the bacterial histone-like protein family. As to quaternary structure, heterodimer of an alpha and a beta chain.

Its function is as follows. This protein is one of the two subunits of integration host factor, a specific DNA-binding protein that functions in genetic recombination as well as in transcriptional and translational control. The polypeptide is Integration host factor subunit beta (Rhodopseudomonas palustris (strain BisB5)).